Reading from the N-terminus, the 1122-residue chain is Angiopoietin-1 receptor (1122 aa).

The first 22 residues, 1–22 (MDSLAGLVLCGVSLLLYGVVEG), serve as a signal peptide directing secretion. Residues 23–746 (AMDLILINSL…SADLGGGKML (724 aa)) are Extracellular-facing. Cysteines 44 and 102 form a disulfide. In terms of domain architecture, Ig-like C2-type 1 spans 44–123 (CIASGWHPHE…RTMKMRQQAS (80 aa)). N-linked (GlcNAc...) asparagine glycosylation is found at Asn140 and Asn158. EGF-like domains follow at residues 210-252 (RCEA…RTCE), 254-299 (ACEP…LQCN), and 301-341 (ACPS…LQCE). Intrachain disulfides connect Cys211–Cys220, Cys224–Cys233, Cys227–Cys240, Cys242–Cys251, Cys255–Cys264, Cys268–Cys274, Cys280–Cys287, Cys289–Cys298, Cys302–Cys311, Cys315–Cys323, Cys317–Cys329, Cys331–Cys340, and Cys370–Cys424. Positions 350–440 (PQIEDLPDHI…GMVEKPFNIS (91 aa)) constitute an Ig-like C2-type 2 domain. N-linked (GlcNAc...) asparagine glycans are attached at residues Asn399, Asn438, Asn464, Asn558, Asn595, Asn648, and Asn690. 3 consecutive Fibronectin type-III domains span residues 444–539 (LPEP…TASI), 543–635 (PPRG…TLSD), and 640–733 (QPEN…TLPH). A helical transmembrane segment spans residues 747–767 (LIAILGSAGMTCITVLLAFLI). The Cytoplasmic portion of the chain corresponds to 768 to 1122 (MLQLKRANVQ…GIDCSAEEAA (355 aa)). Residues 822-1094 (IKFQDVIGEG…QILVSLNRML (273 aa)) form the Protein kinase domain. Residues 828-836 (IGEGNFGQV) and Lys853 contribute to the ATP site. Position 858 is a phosphotyrosine; by autocatalysis (Tyr858). Residue Asp962 is the Proton acceptor of the active site. Tyr990, Tyr1100, and Tyr1106 each carry phosphotyrosine; by autocatalysis.

The protein belongs to the protein kinase superfamily. Tyr protein kinase family. Tie subfamily. In terms of assembly, homodimer. Heterodimer with TIE1. Interacts with ANGPT1, ANGPT2 and ANGPT4. At cell-cell contacts in quiescent cells, forms a signaling complex composed of ANGPT1 plus TEK molecules from two adjoining cells. In the absence of endothelial cell-cell contacts, interaction with ANGPT1 mediates contacts with the extracellular matrix. Interacts (tyrosine phosphorylated) with TNIP2. Interacts (tyrosine phosphorylated) with SHC1 (via SH2 domain). Interacts with PTPRB; this promotes endothelial cell-cell adhesion. Interacts with DOK2, GRB2, GRB7, GRB14, PIK3R1 and PTPN11/SHP2. Colocalizes with DOK2 at contacts with the extracellular matrix in migrating cells. Post-translationally, proteolytic processing leads to the shedding of the extracellular domain (soluble TIE-2 alias sTIE-2). In terms of processing, autophosphorylated on tyrosine residues in response to ligand binding. Autophosphorylation occurs in trans, i.e. one subunit of the dimeric receptor phosphorylates tyrosine residues on the other subunit. Autophosphorylation occurs in a sequential manner, where Tyr-990 in the kinase activation loop is phosphorylated first, followed by autophosphorylation at Tyr-1106 and at additional tyrosine residues. ANGPT1-induced phosphorylation is impaired during hypoxia, due to increased expression of ANGPT2. Phosphorylation is important for interaction with GRB14, PIK3R1 and PTPN11. Phosphorylation at Tyr-1100 is important for interaction with GRB2 and GRB7. Phosphorylation at Tyr-1106 is important for interaction with DOK2 and for coupling to downstream signal transduction pathways in endothelial cells. Dephosphorylated by PTPRB. Ubiquitinated. The phosphorylated receptor is ubiquitinated and internalized, leading to its degradation. In terms of tissue distribution, specifically expressed in developing vascular endothelial cells. Abundantly expressed in lung and heart, moderately in brain, liver and kidney, and weakly in thymus, spleen and testis.

Its subcellular location is the cell membrane. It localises to the cell junction. The protein resides in the focal adhesion. The protein localises to the cytoplasm. It is found in the cytoskeleton. Its subcellular location is the secreted. The catalysed reaction is L-tyrosyl-[protein] + ATP = O-phospho-L-tyrosyl-[protein] + ADP + H(+). With respect to regulation, angiopoietin binding leads to receptor dimerization and activation by autophosphorylation at Tyr-990 on the kinase activation loop. In terms of biological role, tyrosine-protein kinase that acts as a cell-surface receptor for ANGPT1, ANGPT2 and ANGPT4 and regulates angiogenesis, endothelial cell survival, proliferation, migration, adhesion and cell spreading, reorganization of the actin cytoskeleton, but also maintenance of vascular quiescence. Has anti-inflammatory effects by preventing the leakage of pro-inflammatory plasma proteins and leukocytes from blood vessels. Required for normal angiogenesis and heart development during embryogenesis. Required for postnatal hematopoiesis. After birth, activates or inhibits angiogenesis, depending on the context. Inhibits angiogenesis and promotes vascular stability in quiescent vessels, where endothelial cells have tight contacts. In quiescent vessels, ANGPT1 oligomers recruit TEK to cell-cell contacts, forming complexes with TEK molecules from adjoining cells, and this leads to preferential activation of phosphatidylinositol 3-kinase and the AKT1 signaling cascades. In migrating endothelial cells that lack cell-cell adhesions, ANGT1 recruits TEK to contacts with the extracellular matrix, leading to the formation of focal adhesion complexes, activation of PTK2/FAK and of the downstream kinases MAPK1/ERK2 and MAPK3/ERK1, and ultimately to the stimulation of sprouting angiogenesis. ANGPT1 signaling triggers receptor dimerization and autophosphorylation at specific tyrosine residues that then serve as binding sites for scaffold proteins and effectors. Signaling is modulated by ANGPT2 that has lower affinity for TEK, can promote TEK autophosphorylation in the absence of ANGPT1, but inhibits ANGPT1-mediated signaling by competing for the same binding site. Signaling is also modulated by formation of heterodimers with TIE1, and by proteolytic processing that gives rise to a soluble TEK extracellular domain. The soluble extracellular domain modulates signaling by functioning as decoy receptor for angiopoietins. TEK phosphorylates DOK2, GRB7, GRB14, PIK3R1, SHC1 and TIE1. This Mus musculus (Mouse) protein is Angiopoietin-1 receptor (Tek).